A 286-amino-acid chain; its full sequence is NAD kinase (286 aa).

Aspartate 66 acts as the Proton acceptor in catalysis. Residues 66–67, 137–138, arginine 148, arginine 165, aspartate 167, and 178–183 each bind NAD(+); these read DG, ND, and TAYSMS.

The protein belongs to the NAD kinase family. A divalent metal cation is required as a cofactor.

It is found in the cytoplasm. It catalyses the reaction NAD(+) + ATP = ADP + NADP(+) + H(+). Its function is as follows. Involved in the regulation of the intracellular balance of NAD and NADP, and is a key enzyme in the biosynthesis of NADP. Catalyzes specifically the phosphorylation on 2'-hydroxyl of the adenosine moiety of NAD to yield NADP. In Chlorobium chlorochromatii (strain CaD3), this protein is NAD kinase.